The sequence spans 283 residues: UPF0273 protein STK_18300 (283 aa).

A KaiC domain is found at 4-249 (LRVRTYIPGF…YLRITNVKAE (246 aa)). 31 to 38 (GGPGTGKS) is an ATP binding site. The interval 261-283 (MKKAVEESEEEKESIQEAEIEEE) is disordered. The span at 267-283 (ESEEEKESIQEAEIEEE) shows a compositional bias: acidic residues.

Belongs to the UPF0273 family.

This chain is UPF0273 protein STK_18300, found in Sulfurisphaera tokodaii (strain DSM 16993 / JCM 10545 / NBRC 100140 / 7) (Sulfolobus tokodaii).